Here is a 594-residue protein sequence, read N- to C-terminus: Protein HOTHEAD (594 aa).

Residues 1–19 (MALKLFLFALLLCLPTSLS) form the signal peptide. FAD is bound at residue 64–91 (DYIVIGGGTAGCPLAATLSQNFSVLVLE). The Proton acceptor role is filled by histidine 529.

This sequence belongs to the GMC oxidoreductase family. It depends on FAD as a cofactor. In terms of tissue distribution, expressed in roots, leaves, stems, inflorescences and siliques. Found not only in epidermis but also in all sub-epidermal cell layers.

Probable FAD-dependent enzyme. Involved in regulating post-genital organ fusion. Required to limit cellular interactions between contacting epidermal cells during floral development. This is Protein HOTHEAD (HTH) from Arabidopsis thaliana (Mouse-ear cress).